Consider the following 150-residue polypeptide: Large ribosomal subunit protein bL9 (150 aa).

This sequence belongs to the bacterial ribosomal protein bL9 family.

Functionally, binds to the 23S rRNA. The polypeptide is Large ribosomal subunit protein bL9 (Vibrio parahaemolyticus serotype O3:K6 (strain RIMD 2210633)).